Here is a 302-residue protein sequence, read N- to C-terminus: Sulfate adenylyltransferase subunit 2 (302 aa).

This sequence belongs to the PAPS reductase family. CysD subfamily. Heterodimer composed of CysD, the smaller subunit, and CysN.

The catalysed reaction is sulfate + ATP + H(+) = adenosine 5'-phosphosulfate + diphosphate. The protein operates within sulfur metabolism; hydrogen sulfide biosynthesis; sulfite from sulfate: step 1/3. Functionally, with CysN forms the ATP sulfurylase (ATPS) that catalyzes the adenylation of sulfate producing adenosine 5'-phosphosulfate (APS) and diphosphate, the first enzymatic step in sulfur assimilation pathway. APS synthesis involves the formation of a high-energy phosphoric-sulfuric acid anhydride bond driven by GTP hydrolysis by CysN coupled to ATP hydrolysis by CysD. This Baumannia cicadellinicola subsp. Homalodisca coagulata protein is Sulfate adenylyltransferase subunit 2.